A 51-amino-acid polypeptide reads, in one-letter code: Large ribosomal subunit protein eL39z (51 aa).

This sequence belongs to the eukaryotic ribosomal protein eL39 family.

This is Large ribosomal subunit protein eL39z (RPL39A) from Oryza sativa subsp. japonica (Rice).